The chain runs to 704 residues: Elongation factor G (704 aa).

Residues 8 to 290 enclose the tr-type G domain; the sequence is ARYRNIGISA…AVIDYLPSPV (283 aa). GTP contacts are provided by residues 17 to 24, 88 to 92, and 142 to 145; these read AHIDAGKT, DTPGH, and NKMD. N6-acetyllysine occurs at positions 504 and 643.

This sequence belongs to the TRAFAC class translation factor GTPase superfamily. Classic translation factor GTPase family. EF-G/EF-2 subfamily.

The protein localises to the cytoplasm. In terms of biological role, catalyzes the GTP-dependent ribosomal translocation step during translation elongation. During this step, the ribosome changes from the pre-translocational (PRE) to the post-translocational (POST) state as the newly formed A-site-bound peptidyl-tRNA and P-site-bound deacylated tRNA move to the P and E sites, respectively. Catalyzes the coordinated movement of the two tRNA molecules, the mRNA and conformational changes in the ribosome. In Shigella flexneri, this protein is Elongation factor G.